A 445-amino-acid chain; its full sequence is tRNA(Ile)-lysidine synthase (445 aa).

30 to 35 (SGGLDS) contributes to the ATP binding site.

Belongs to the tRNA(Ile)-lysidine synthase family.

It localises to the cytoplasm. The enzyme catalyses cytidine(34) in tRNA(Ile2) + L-lysine + ATP = lysidine(34) in tRNA(Ile2) + AMP + diphosphate + H(+). In terms of biological role, ligates lysine onto the cytidine present at position 34 of the AUA codon-specific tRNA(Ile) that contains the anticodon CAU, in an ATP-dependent manner. Cytidine is converted to lysidine, thus changing the amino acid specificity of the tRNA from methionine to isoleucine. The sequence is that of tRNA(Ile)-lysidine synthase from Alkalilimnicola ehrlichii (strain ATCC BAA-1101 / DSM 17681 / MLHE-1).